The chain runs to 256 residues: Ribonuclease HII (256 aa).

Residues 67–255 (QLVGGVDEVG…VSEMVGLKKA (189 aa)) form the RNase H type-2 domain. 3 residues coordinate a divalent metal cation: Asp73, Glu74, and Asp165.

It belongs to the RNase HII family. Mn(2+) serves as cofactor. Mg(2+) is required as a cofactor.

Its subcellular location is the cytoplasm. It catalyses the reaction Endonucleolytic cleavage to 5'-phosphomonoester.. In terms of biological role, endonuclease that specifically degrades the RNA of RNA-DNA hybrids. The polypeptide is Ribonuclease HII (Lactobacillus delbrueckii subsp. bulgaricus (strain ATCC 11842 / DSM 20081 / BCRC 10696 / JCM 1002 / NBRC 13953 / NCIMB 11778 / NCTC 12712 / WDCM 00102 / Lb 14)).